The chain runs to 159 residues: 2-C-methyl-D-erythritol 2,4-cyclodiphosphate synthase (159 aa).

The a divalent metal cation site is built by Asp-8 and His-10. 4-CDP-2-C-methyl-D-erythritol 2-phosphate is bound by residues 8-10 and 34-35; these read DVH and HS. His-42 contributes to the a divalent metal cation binding site. 4-CDP-2-C-methyl-D-erythritol 2-phosphate contacts are provided by residues 56–58, 61–65, 100–106, 132–135, Phe-139, and Arg-142; these read DIG, FPDTD, AQAPKMA, and TTSE.

Belongs to the IspF family. As to quaternary structure, homotrimer. The cofactor is a divalent metal cation.

The catalysed reaction is 4-CDP-2-C-methyl-D-erythritol 2-phosphate = 2-C-methyl-D-erythritol 2,4-cyclic diphosphate + CMP. Its pathway is isoprenoid biosynthesis; isopentenyl diphosphate biosynthesis via DXP pathway; isopentenyl diphosphate from 1-deoxy-D-xylulose 5-phosphate: step 4/6. Functionally, involved in the biosynthesis of isopentenyl diphosphate (IPP) and dimethylallyl diphosphate (DMAPP), two major building blocks of isoprenoid compounds. Catalyzes the conversion of 4-diphosphocytidyl-2-C-methyl-D-erythritol 2-phosphate (CDP-ME2P) to 2-C-methyl-D-erythritol 2,4-cyclodiphosphate (ME-CPP) with a corresponding release of cytidine 5-monophosphate (CMP). This Aliivibrio salmonicida (strain LFI1238) (Vibrio salmonicida (strain LFI1238)) protein is 2-C-methyl-D-erythritol 2,4-cyclodiphosphate synthase.